Here is a 1342-residue protein sequence, read N- to C-terminus: DNA-directed RNA polymerase subunit beta (1342 aa).

Belongs to the RNA polymerase beta chain family. In terms of assembly, the RNAP catalytic core consists of 2 alpha, 1 beta, 1 beta' and 1 omega subunit. When a sigma factor is associated with the core the holoenzyme is formed, which can initiate transcription.

The catalysed reaction is RNA(n) + a ribonucleoside 5'-triphosphate = RNA(n+1) + diphosphate. Its function is as follows. DNA-dependent RNA polymerase catalyzes the transcription of DNA into RNA using the four ribonucleoside triphosphates as substrates. The sequence is that of DNA-directed RNA polymerase subunit beta from Klebsiella pneumoniae subsp. pneumoniae (strain ATCC 700721 / MGH 78578).